Consider the following 569-residue polypeptide: 63 kDa chaperonin, mitochondrial (569 aa).

The N-terminal 29 residues, 1-29, are a transit peptide targeting the mitochondrion; that stretch reads MFKMYRSPHITRNSFKYLKATNINSCRFY.

The protein belongs to the chaperonin (HSP60) family. As to quaternary structure, forms a single seven-member ring complex, in tight association with the p60 protein. In terms of tissue distribution, testis.

The protein resides in the mitochondrion. Its function is as follows. Implicated in mitochondrial protein import and macromolecular assembly. May facilitate the correct folding of imported proteins. May also prevent misfolding and promote the refolding and proper assembly of unfolded polypeptides generated under stress conditions in the mitochondrial matrix. The protein is 63 kDa chaperonin, mitochondrial of Heliothis virescens (Tobacco budworm moth).